Consider the following 61-residue polypeptide: Potassium channel toxin alpha-KTx 15.6 (61 aa).

Positions 1–23 are cleaved as a signal peptide; the sequence is MKAFYGMLVIFILCSTCYISVDS. Position 24 is a pyrrolidone carboxylic acid (glutamine 24). 3 disulfides stabilise this stretch: cysteine 31/cysteine 52, cysteine 37/cysteine 57, and cysteine 41/cysteine 59.

Belongs to the short scorpion toxin superfamily. Potassium channel inhibitor family. Alpha-KTx 15 subfamily. As to expression, expressed by the venom gland.

It localises to the secreted. Functionally, irreversibly blocks the A-type voltage-gated potassium channels in rat cerebellum granular cells (190 nM induce 50% inhibitory effect) (IC(50)=190 nM). Also weakly inhibits Kv1.2/KCNA2 and Kv1.3/KCNA3. This Tityus discrepans (Venezuelan scorpion) protein is Potassium channel toxin alpha-KTx 15.6.